A 433-amino-acid chain; its full sequence is Aspartate--tRNA(Asp/Asn) ligase (433 aa).

E167 contacts L-aspartate. The interval 189–192 (QLFK) is aspartate. R211 is a binding site for L-aspartate. Residues 211 to 213 (RAE), 219 to 221 (RHL), and E356 contribute to the ATP site. Residues E356 and S359 each coordinate Mg(2+). Residues S359 and R363 each coordinate L-aspartate. Position 404–407 (404–407 (GGER)) interacts with ATP.

Belongs to the class-II aminoacyl-tRNA synthetase family. Type 2 subfamily. In terms of assembly, homodimer. Mg(2+) serves as cofactor.

The protein localises to the cytoplasm. The enzyme catalyses tRNA(Asx) + L-aspartate + ATP = L-aspartyl-tRNA(Asx) + AMP + diphosphate. In terms of biological role, aspartyl-tRNA synthetase with relaxed tRNA specificity since it is able to aspartylate not only its cognate tRNA(Asp) but also tRNA(Asn). Reaction proceeds in two steps: L-aspartate is first activated by ATP to form Asp-AMP and then transferred to the acceptor end of tRNA(Asp/Asn). This is Aspartate--tRNA(Asp/Asn) ligase from Natronomonas pharaonis (strain ATCC 35678 / DSM 2160 / CIP 103997 / JCM 8858 / NBRC 14720 / NCIMB 2260 / Gabara) (Halobacterium pharaonis).